The chain runs to 347 residues: MEEQLIPIQWKDDALVLLDQTLLPNEVVYESFNTAEGVWDAIQVMKVRGAPAIGVSAAYGVYLGVKEFVESTEAEFIDEVKRVCAYLATSRPTAVNLFWALERMESVATDHTHLSITQLKDRLLEEAKEIHREDEEINRQIGEHALTLFHDGMGVLTHCNAGALATTKYGTATAPMYLAKEKGWDLKIYSDETRPRLQGSTLTALELQRAGIDVTVITDNMAAMVMSQGKIDAVIVGCDRVAANGDVANKIGTLGVSILAKYYNIPFYVAAPTPTIDLKTPTGKEIPIEERDASEVINRFGQYSAPKESKVYNPAFDVTPHENVIAIITEKGIVKAPFTENLKNLFQ.

Residues 48–50 (RGA), Arg-91, and Gln-198 contribute to the substrate site. Asp-239 serves as the catalytic Proton donor. 249–250 (NK) lines the substrate pocket.

The protein belongs to the EIF-2B alpha/beta/delta subunits family. DrdI subfamily.

The enzyme catalyses 5-deoxy-alpha-D-ribose 1-phosphate = 5-deoxy-D-ribulose 1-phosphate. It participates in carbohydrate degradation. Functionally, catalyzes the isomerization of 5-deoxy-alpha-D-ribose 1-phosphate to 5-deoxy-D-ribulose 1-phosphate, as part of a 5-deoxyribose salvage pathway that recycles this toxic radical SAM enzyme by-product to mainstream metabolites. This is 5-deoxyribose 1-phosphate isomerase from Bacillus thuringiensis subsp. konkukian (strain 97-27).